Here is a 101-residue protein sequence, read N- to C-terminus: Integration host factor subunit alpha (101 aa).

The protein belongs to the bacterial histone-like protein family. In terms of assembly, heterodimer of an alpha and a beta chain.

In terms of biological role, this protein is one of the two subunits of integration host factor, a specific DNA-binding protein that functions in genetic recombination as well as in transcriptional and translational control. The sequence is that of Integration host factor subunit alpha from Halorhodospira halophila (strain DSM 244 / SL1) (Ectothiorhodospira halophila (strain DSM 244 / SL1)).